A 159-amino-acid polypeptide reads, in one-letter code: MSDVENQPFFNIQRIYLKDLSLEQPNSPAIFLEQEMPAVEVEVDVKAERLAENVYEIVVAGTVTAKVREKVAFLVEAKQAGIFDIRNIPAEQIDPLCGIACPTILFPYLRSNIADSITRAGFPPIHLAEINFQALYEQRLAEISQQQQQGGAPNGTTLN.

This sequence belongs to the SecB family. In terms of assembly, homotetramer, a dimer of dimers. One homotetramer interacts with 1 SecA dimer.

It is found in the cytoplasm. In terms of biological role, one of the proteins required for the normal export of preproteins out of the cell cytoplasm. It is a molecular chaperone that binds to a subset of precursor proteins, maintaining them in a translocation-competent state. It also specifically binds to its receptor SecA. The sequence is that of Protein-export protein SecB from Burkholderia mallei (strain NCTC 10229).